A 63-amino-acid chain; its full sequence is Large ribosomal subunit protein eL24 (63 aa).

Positions 7, 10, 33, and 37 each coordinate Zn(2+). The C4-type zinc finger occupies 7–37 (CSFCGGSIEPGTGLMYVLRNGQILWFCSSKC).

Belongs to the eukaryotic ribosomal protein eL24 family. In terms of assembly, part of the 50S ribosomal subunit. Forms a cluster with proteins L3 and L14. Zn(2+) serves as cofactor.

Binds to the 23S rRNA. The chain is Large ribosomal subunit protein eL24 from Aeropyrum pernix (strain ATCC 700893 / DSM 11879 / JCM 9820 / NBRC 100138 / K1).